The primary structure comprises 98 residues: NADH-ubiquinone oxidoreductase chain 4L (98 aa).

Transmembrane regions (helical) follow at residues 1 to 21, 29 to 49, and 61 to 81; these read MPVV…GLLV, SLLC…VTVL, and IILL…LVMV.

It belongs to the complex I subunit 4L family. Core subunit of respiratory chain NADH dehydrogenase (Complex I) which is composed of 45 different subunits.

It is found in the mitochondrion inner membrane. It carries out the reaction a ubiquinone + NADH + 5 H(+)(in) = a ubiquinol + NAD(+) + 4 H(+)(out). Its function is as follows. Core subunit of the mitochondrial membrane respiratory chain NADH dehydrogenase (Complex I) which catalyzes electron transfer from NADH through the respiratory chain, using ubiquinone as an electron acceptor. Part of the enzyme membrane arm which is embedded in the lipid bilayer and involved in proton translocation. This is NADH-ubiquinone oxidoreductase chain 4L (MT-ND4L) from Ursus arctos (Brown bear).